A 445-amino-acid polypeptide reads, in one-letter code: Phosphoglucosamine mutase (445 aa).

Serine 99 (phosphoserine intermediate) is an active-site residue. Positions 99, 242, 244, and 246 each coordinate Mg(2+). Serine 99 carries the post-translational modification Phosphoserine.

This sequence belongs to the phosphohexose mutase family. Requires Mg(2+) as cofactor. Post-translationally, activated by phosphorylation.

It catalyses the reaction alpha-D-glucosamine 1-phosphate = D-glucosamine 6-phosphate. Catalyzes the conversion of glucosamine-6-phosphate to glucosamine-1-phosphate. The chain is Phosphoglucosamine mutase from Helicobacter pylori (strain HPAG1).